Consider the following 86-residue polypeptide: Bacteriocin thailandicin (86 aa).

Residues 23-86 constitute a cross-link (cyclopeptide (Leu-Trp)); that stretch reads LTANLGISSY…KYGAKYSAAW (64 aa).

The protein localises to the secreted. Cyclopeptide antibiotic with bacteriolytic activity against the Gram-positive bacteria S.aureus and S.thermophilus, and lower activity against the Gram-negative bacteria E.coli and P.aeruginosa. This is Bacteriocin thailandicin from Enterococcus thailandicus.